Consider the following 258-residue polypeptide: Casein kinase II subunit beta' (258 aa).

Residues 1-10 (MGSRSENVGT) show a composition bias toward polar residues. The interval 1–29 (MGSRSENVGTVTREGSRVEQDDVLMDDDS) is disordered.

Belongs to the casein kinase 2 subunit beta family. As to quaternary structure, tetramer composed of an alpha subunit, an alpha' subunit, one beta subunit and one beta' subunit. Interacts with FACT subunits POB3 and SPT16. Interaction with YTA7. Phosphorylated by alpha subunit. Post-translationally, the N-terminus is blocked.

Functionally, regulatory subunit of casein kinase II/CK2. As part of the kinase complex regulates the basal catalytic activity of the alpha subunit a constitutively active serine/threonine-protein kinase that phosphorylates a large number of substrates containing acidic residues C-terminal to the phosphorylated serine or threonine. In Saccharomyces cerevisiae (strain ATCC 204508 / S288c) (Baker's yeast), this protein is Casein kinase II subunit beta'.